A 352-amino-acid polypeptide reads, in one-letter code: N-acetyl-gamma-glutamyl-phosphate reductase (352 aa).

C155 is a catalytic residue.

The protein belongs to the NAGSA dehydrogenase family. Type 1 subfamily.

The protein resides in the cytoplasm. It carries out the reaction N-acetyl-L-glutamate 5-semialdehyde + phosphate + NADP(+) = N-acetyl-L-glutamyl 5-phosphate + NADPH + H(+). The protein operates within amino-acid biosynthesis; L-arginine biosynthesis; N(2)-acetyl-L-ornithine from L-glutamate: step 3/4. Functionally, catalyzes the NADPH-dependent reduction of N-acetyl-5-glutamyl phosphate to yield N-acetyl-L-glutamate 5-semialdehyde. The sequence is that of N-acetyl-gamma-glutamyl-phosphate reductase from Rippkaea orientalis (strain PCC 8801 / RF-1) (Cyanothece sp. (strain PCC 8801)).